We begin with the raw amino-acid sequence, 305 residues long: Probable cell division protein WhiA (305 aa).

The H-T-H motif DNA-binding region spans 269-302 (TIKELGELLDPPLGKSGVNHRLRKLVERSNDLKK).

It belongs to the WhiA family.

Its function is as follows. Involved in cell division and chromosome segregation. In Lactococcus lactis subsp. cremoris (strain MG1363), this protein is Probable cell division protein WhiA.